Here is a 348-residue protein sequence, read N- to C-terminus: Olfactory receptor 2T4 (348 aa).

Residues 1-57 are Extracellular-facing; the sequence is MDNITWMASHTGWSDFILMGLFRQSKHPMANITWMANHTGWSDFILLGLFRQSKHPA. Residues N31 and N37 are each glycosylated (N-linked (GlcNAc...) asparagine). The helical transmembrane segment at 58-81 threads the bilayer; it reads LLCVVIFVVFLMALSGNAVLILLI. At 82–89 the chain is on the cytoplasmic side; sequence HCDAHLHT. A helical transmembrane segment spans residues 90–111; sequence PMYFFISQLSLMDMAYISVTVP. Residues 112–132 lie on the Extracellular side of the membrane; sequence KMLLDQVMGVNKISAPECGMQ. C129 and C221 are oxidised to a cystine. Residues 133-152 form a helical membrane-spanning segment; sequence MFFYVTLAGSEFFLLATMAY. The Cytoplasmic portion of the chain corresponds to 153–171; that stretch reads DRYVAICHPLRYPVLMNHR. The helical transmembrane segment at 172-190 threads the bilayer; the sequence is VCLFLSSGCWFLGSVDGFT. Residues 191-227 lie on the Extracellular side of the membrane; sequence FTPITMTFPFRGSREIHHFFCEVPAVLNLSCSDTSLY. The N-linked (GlcNAc...) asparagine glycan is linked to N218. A helical membrane pass occupies residues 228–251; it reads EIFMYLCCVLMLLIPVVIISSSYL. Residues 252–268 lie on the Cytoplasmic side of the membrane; that stretch reads LILLTIHGMNSAEGRKK. A helical transmembrane segment spans residues 269–291; sequence AFATCSSHLTVVILFYGAAIYTY. At 292-304 the chain is on the extracellular side; it reads MLPSSYHTPEKDM. The helical transmembrane segment at 305-324 threads the bilayer; sequence MVSVFYTILTPVVNPLIYSL. Topologically, residues 325 to 348 are cytoplasmic; the sequence is RNKDVMGALKKMLTVEPAFQKAME.

This sequence belongs to the G-protein coupled receptor 1 family.

The protein resides in the cell membrane. Its function is as follows. Odorant receptor. This Homo sapiens (Human) protein is Olfactory receptor 2T4 (OR2T4).